The following is a 615-amino-acid chain: ATP-dependent RNA helicase mrh4, mitochondrial (615 aa).

Residues 1–37 (MLRPKAGKCLLCSFRAAQKPVSQKWPSRALSMRTRLP) constitute a mitochondrion transit peptide. The segment at 21–108 (VSQKWPSRAL…HRDRDDKKDR (88 aa)) is disordered. Residues 90 to 108 (QERRTSRLDHRDRDDKKDR) are compositionally biased toward basic and acidic residues. The Q motif motif lies at 138–171 (QSFEQFALLDSVKQAIFQQALPELKEHVPTPVQR). The 212-residue stretch at 184–395 (RRPKSEMEQY…RKRFPDINRL (212 aa)) folds into the Helicase ATP-binding domain. Residue 197–204 (AETGSGKT) participates in ATP binding. The DEAD box signature appears at 342-345 (DEAD). Residues 444 to 615 (PVKGLMDVKR…EGMFEGKALI (172 aa)) enclose the Helicase C-terminal domain.

Belongs to the DEAD box helicase family. MRH4 subfamily.

Its subcellular location is the mitochondrion. The catalysed reaction is ATP + H2O = ADP + phosphate + H(+). Functionally, ATP-binding RNA helicase involved in mitochondrial RNA metabolism. Required for maintenance of mitochondrial DNA. This is ATP-dependent RNA helicase mrh4, mitochondrial (mrh4) from Sclerotinia sclerotiorum (strain ATCC 18683 / 1980 / Ss-1) (White mold).